A 341-amino-acid polypeptide reads, in one-letter code: Annexin A1 isoform p35 (341 aa).

Annexin repeat units lie at residues 37–108 (FDPS…ALLK), 109–180 (TPAQ…SLAK), 192–263 (ELAE…ALVK), and 267–338 (SKPA…ALCG).

Belongs to the annexin family. Post-translationally, in contrast to mammalian homologs, does not contain a tyrosine phosphorylation site in the N-terminal part.

Its subcellular location is the nucleus. The protein resides in the cytoplasm. The protein localises to the cell projection. It is found in the cilium. It localises to the basolateral cell membrane. In terms of biological role, calcium/phospholipid-binding protein which promotes membrane fusion and is involved in exocytosis. This protein regulates phospholipase A2 activity. It seems to bind from two to four calcium ions with high affinity. This chain is Annexin A1 isoform p35 (CP35), found in Columba livia (Rock dove).